The following is a 543-amino-acid chain: Phenylalanine--tRNA ligase beta subunit (543 aa).

One can recognise a B5 domain in the interval 269–344; sequence FDFRIMRPAR…KSKGIENIEE (76 aa). D322, D328, E331, and D332 together coordinate Mg(2+).

It belongs to the phenylalanyl-tRNA synthetase beta subunit family. Type 2 subfamily. Tetramer of two alpha and two beta subunits. The cofactor is Mg(2+).

The protein resides in the cytoplasm. The enzyme catalyses tRNA(Phe) + L-phenylalanine + ATP = L-phenylalanyl-tRNA(Phe) + AMP + diphosphate + H(+). The sequence is that of Phenylalanine--tRNA ligase beta subunit from Thermoplasma acidophilum (strain ATCC 25905 / DSM 1728 / JCM 9062 / NBRC 15155 / AMRC-C165).